The primary structure comprises 387 residues: Probable 1-alkyl-2-acetylglycerophosphocholine esterase (387 aa).

The signal sequence occupies residues M1–A17. N-linked (GlcNAc...) asparagine glycans are attached at residues N51 and N141. S227 serves as the catalytic Nucleophile. D250 functions as the Charge relay system in the catalytic mechanism. An N-linked (GlcNAc...) asparagine glycan is attached at N283. Residue H313 is the Charge relay system of the active site.

Belongs to the AB hydrolase superfamily. Lipase family.

The protein localises to the secreted. The enzyme catalyses a 1-O-alkyl-2-acetyl-sn-glycero-3-phosphocholine + H2O = a 1-O-alkyl-sn-glycero-3-phosphocholine + acetate + H(+). The polypeptide is Probable 1-alkyl-2-acetylglycerophosphocholine esterase (Arthroderma benhamiae (strain ATCC MYA-4681 / CBS 112371) (Trichophyton mentagrophytes)).